The sequence spans 542 residues: Chaperonin GroEL 2 (542 aa).

ATP is bound by residues 30–33, K51, 87–91, G415, and D496; these read TLGP and DGTTT.

This sequence belongs to the chaperonin (HSP60) family. As to quaternary structure, forms a cylinder of 14 subunits composed of two heptameric rings stacked back-to-back. Interacts with the co-chaperonin GroES.

The protein localises to the cytoplasm. The catalysed reaction is ATP + H2O + a folded polypeptide = ADP + phosphate + an unfolded polypeptide.. Together with its co-chaperonin GroES, plays an essential role in assisting protein folding. The GroEL-GroES system forms a nano-cage that allows encapsulation of the non-native substrate proteins and provides a physical environment optimized to promote and accelerate protein folding. The chain is Chaperonin GroEL 2 from Sinorhizobium fredii (strain NBRC 101917 / NGR234).